A 478-amino-acid polypeptide reads, in one-letter code: Noelin-3 (478 aa).

A signal peptide spans 1 to 23 (MSPPLLKLGAVLSTMAMISNWMS). N-linked (GlcNAc...) asparagine glycans are attached at residues N33, N95, N179, N299, and N465. Residues 77-217 (CSRDAKSRQL…TRLRDCMKKL (141 aa)) adopt a coiled-coil conformation. An Olfactomedin-like domain is found at 218–470 (TCGKLMKITG…QVLFNVTLFH (253 aa)). Residues C219 and C401 are joined by a disulfide bond.

In terms of assembly, peripherally associated with AMPAR complex. AMPAR complex consists of an inner core made of 4 pore-forming GluA/GRIA proteins (GRIA1, GRIA2, GRIA3 and GRIA4) and 4 major auxiliary subunits arranged in a twofold symmetry. One of the two pairs of distinct binding sites is occupied either by CNIH2, CNIH3 or CACNG2, CACNG3. The other harbors CACNG2, CACNG3, CACNG4, CACNG8 or GSG1L. This inner core of AMPAR complex is complemented by outer core constituents binding directly to the GluA/GRIA proteins at sites distinct from the interaction sites of the inner core constituents. Outer core constituents include at least PRRT1, PRRT2, CKAMP44/SHISA9, FRRS1L and NRN1. The proteins of the inner and outer core serve as a platform for other, more peripherally associated AMPAR constituents, including OLFM3. Alone or in combination, these auxiliary subunits control the gating and pharmacology of the AMPAR complex and profoundly impact their biogenesis and protein processing. Homodimer. Interacts with MYOC. Interacts with OLFM2. In the eye, expressed in trabecular meshwork and neural retina; in non-ocular tissues, expressed in brain and lung.

It localises to the secreted. Its subcellular location is the synapse. The polypeptide is Noelin-3 (OLFM3) (Homo sapiens (Human)).